The chain runs to 34 residues: Photosystem II reaction center protein Psb30 (34 aa).

Residues 6-26 (VIGQLVSTGLIGLLGPAVIIL) traverse the membrane as a helical segment.

Belongs to the Psb30/Ycf12 family. As to quaternary structure, PSII is composed of 1 copy each of membrane proteins PsbA, PsbB, PsbC, PsbD, PsbE, PsbF, PsbH, PsbI, PsbJ, PsbK, PsbL, PsbM, PsbT, PsbX, PsbY, PsbZ, Psb30/Ycf12, peripheral proteins of the oxygen-evolving complex and a large number of cofactors. It forms dimeric complexes.

It localises to the plastid. The protein resides in the chloroplast thylakoid membrane. Its function is as follows. A core subunit of photosystem II (PSII), probably helps stabilize the reaction center. The sequence is that of Photosystem II reaction center protein Psb30 from Skeletonema costatum (Marine centric diatom).